The following is a 426-amino-acid chain: ORC1-type DNA replication protein 1 (426 aa).

ATP-binding positions include 62–66, Tyr211, and Arg223; that span reads VGKTL.

It belongs to the CDC6/cdc18 family.

Functionally, involved in regulation of DNA replication. The sequence is that of ORC1-type DNA replication protein 1 (cdc6a) from Haloarcula marismortui (strain ATCC 43049 / DSM 3752 / JCM 8966 / VKM B-1809) (Halobacterium marismortui).